A 375-amino-acid chain; its full sequence is MSSSLRPGPSRWRRAASIVLAAGWSRPETATPPSRPPPAEGFRLLLLQRSPHQGFMPGAHVFSGGVLDAADRSADWLGLFAPHHGPPRFGLGPAPFSRTAFPSLPDTDDHKTDNTGTLPEDVAFRICAVREAFEEAGVLLLRPRTSPPGPAPGPGLALEPPPGLASWRDRVRQDPRHFLRLCAHLDCTPDIWALHNWSAWLTPFLRGTTRRFDTAFFLCCLREPPPVYPDLAEVVGYQWSSPSEATESFLSKEIWLPPPQFYEVRRLANFASLSDLHKFCLGRALEGLERWLPIILLTADGMVHLLPGDELYLEDSDFLENLMSTEKKTEEIMKEGKQFHRIVTYHRHLYDIHVTVQPKYKHVYPKNSVVRKSHL.

Positions 15–263 constitute a Nudix hydrolase domain; that stretch reads AASIVLAAGW…IWLPPPQFYE (249 aa). Residues 91-116 are disordered; sequence LGPAPFSRTAFPSLPDTDDHKTDNTG. The Nudix box signature appears at 116 to 137; the sequence is GTLPEDVAFRICAVREAFEEAG. E131 and E135 together coordinate Mg(2+). The Microbody targeting signal signature appears at 373 to 375; it reads SHL.

It belongs to the Nudix hydrolase family. In terms of assembly, monomer. Mg(2+) serves as cofactor. Mn(2+) is required as a cofactor.

Its subcellular location is the peroxisome. It catalyses the reaction an acyl-CoA + H2O = an acyl-4'-phosphopantetheine + adenosine 3',5'-bisphosphate + 2 H(+). The enzyme catalyses CoA + H2O = (R)-4'-phosphopantetheine + adenosine 3',5'-bisphosphate + 2 H(+). It carries out the reaction hexanoyl-CoA + H2O = hexanoyl-4'-phosphopantetheine + adenosine 3',5'-bisphosphate + 2 H(+). The catalysed reaction is octanoyl-CoA + H2O = S-octanoyl-4'-phosphopantetheine + adenosine 3',5'-bisphosphate + 2 H(+). It catalyses the reaction butanoyl-CoA + H2O = S-butanoyl-4'-phosphopantetheine + adenosine 3',5'-bisphosphate + 2 H(+). The enzyme catalyses propanoyl-CoA + H2O = propanoyl-4'-phosphopantetheine + adenosine 3',5'-bisphosphate + 2 H(+). It carries out the reaction malonyl-CoA + H2O = malonyl-4'-phosphopantetheine + adenosine 3',5'-bisphosphate + 2 H(+). The catalysed reaction is succinyl-CoA + H2O = succinyl-4'-phosphopantetheine + adenosine 3',5'-bisphosphate + 2 H(+). It catalyses the reaction choloyl-CoA + H2O = S-choloyl-4'-phosphopantetheine + adenosine 3',5'-bisphosphate + 2 H(+). The enzyme catalyses 4,8-dimethylnonanoyl-CoA + H2O = S-(4,8-dimethylnonanoyl)-4'-phosphopantetheine + adenosine 3',5'-bisphosphate + 2 H(+). It carries out the reaction (9Z,12Z,15Z)-octadecatrienoyl-CoA + H2O = S-(9Z,12Z,15Z-octadecatrienoyl)-4'-phosphopantetheine + adenosine 3',5'-bisphosphate + 2 H(+). The catalysed reaction is (9Z,12Z)-octadecadienoyl-CoA + H2O = S-(9Z,12Z-octadecadienoyl)-4'-phosphopantetheine + adenosine 3',5'-bisphosphate + 2 H(+). It catalyses the reaction (9Z)-hexadecenoyl-CoA + H2O = S-(9Z-hexadecenoyl)-4'-phosphopantetheine + adenosine 3',5'-bisphosphate + 2 H(+). The enzyme catalyses (9Z)-tetradecenoyl-CoA + H2O = S-(9Z-tetradecenoyl)-4'-phosphopantetheine + adenosine 3',5'-bisphosphate + 2 H(+). It carries out the reaction (6Z)-octenoyl-CoA + H2O = S-(6Z-octenoyl)-4'-phosphopantetheine + adenosine 3',5'-bisphosphate + 2 H(+). The catalysed reaction is hexadecanoyl-CoA + H2O = S-hexadecanoyl-4'-phosphopantetheine + adenosine 3',5'-bisphosphate + 2 H(+). It catalyses the reaction tetradecanoyl-CoA + H2O = tetradecanoyl-4'-phosphopantetheine + adenosine 3',5'-bisphosphate + 2 H(+). The enzyme catalyses dodecanoyl-CoA + H2O = S-dodecanoyl-4'-phosphopantetheine + adenosine 3',5'-bisphosphate + 2 H(+). It carries out the reaction a 5'-end CoA-ribonucleoside in mRNA + H2O = a 5'-end phospho-adenosine-phospho-ribonucleoside in mRNA + (R)-4'-phosphopantetheine + 2 H(+). Fatty acyl-coenzyme A (CoA) diphosphatase that hydrolyzes fatty acyl-CoA to yield acyl-4'-phosphopantetheine and adenosine 3',5'-bisphosphate. Mediates the hydrolysis of a wide range of CoA esters, including choloyl-CoA and branched-chain fatty-acyl-CoA esters and at low substrate concentrations medium and long-chain fatty-acyl-CoA esters are the primary substrates. Highest activity seen with medium-chain acyl-CoA esters and higher rates of activity seen with the unsaturated acyl-CoA esters compared with the saturated esters. Exhibits decapping activity towards dpCoA-capped RNAs in vitro. This Homo sapiens (Human) protein is Acyl-coenzyme A diphosphatase NUDT19 (NUDT19).